A 73-amino-acid chain; its full sequence is Disintegrin mojastin-2 (73 aa).

The 73-residue stretch at 1 to 73 (EAGEECDCGS…ADCPRNGLYG (73 aa)) folds into the Disintegrin domain. Cystine bridges form between cysteine 6–cysteine 21, cysteine 8–cysteine 16, cysteine 15–cysteine 38, cysteine 29–cysteine 35, cysteine 34–cysteine 59, and cysteine 47–cysteine 66. The Cell attachment site signature appears at 51–53 (RGD).

It belongs to the venom metalloproteinase (M12B) family. P-II subfamily. P-IIa sub-subfamily. Monomer (disintegrin). Expressed by the venom gland.

Its subcellular location is the secreted. In terms of biological role, inhibits the three processes involved in platelet function (adhesion, activation and aggregation). It inhibits platelet adhesion to fibronectin with an IC(50) of 58.6 nM. It inhibits ATP release from platelet induced by ADP with an IC(50) of 19.5 nM on platelet-rich plasma, probably by binding to ADP receptors (P2RY1 and P2RY12). Finally, it inhibits ADP-induced platelet aggregation with IC(50) of 44.7 nM on platelet-rich plasma and 19.3 nM on whole blood, probably by binding to alpha-IIb/beta-3 (ITGA2B/ITGB3). Inhibits ADP-induced platelet aggregation (IC(50) = 13.8 nM) probably by binding to alpha-IIb/beta-3 (ITGA2B/ITGB3) located on the platelet surface. The chain is Disintegrin mojastin-2 from Crotalus scutulatus scutulatus (Mojave rattlesnake).